The chain runs to 348 residues: Ubiquitin thioesterase OTU1 (348 aa).

The span at 1-11 shows a compositional bias: basic residues; sequence MFGPAKGRHFG. Residues 1 to 39 form a disordered region; it reads MFGPAKGRHFGVHPAPGFPGGVSQQAAGTKAGPAGAWPV. Residues 50 to 128 are UBX-like; the sequence is RCKAKDGTHV…IIEEDQTRPR (79 aa). An OTU domain is found at 149 to 274; it reads LTRTVVPADN…GIHYDPLQRN (126 aa). A cys-loop region spans residues 154 to 160; sequence VPADNSC. D157 is an active-site residue. C160 functions as the Nucleophile in the catalytic mechanism. A variable-loop region spans residues 213–223; it reads IKRDDTWGGAI. The tract at residues 263–267 is his-loop; sequence YDGIH. I266 provides a ligand contact to substrate. The active site involves H267. The interval 291 to 296 is S2 site; the sequence is DIVLVQ. Residues 318–342 form a C2H2-type zinc finger; it reads LRCMVCQKGLTGQAEAREHAKETGH. Residue H342 is part of the active site.

As to quaternary structure, interacts with VCP; the interaction is direct. Interacts with FAF2/UBXD8. Interacts with DERL1; however interaction is dependent on the UBAX-like region, suggesting that it may be indirect. Interacts with PLAA, UBXN6 and VCP; may form a complex involved in macroautophagy.

It localises to the cytoplasm. It carries out the reaction Thiol-dependent hydrolysis of ester, thioester, amide, peptide and isopeptide bonds formed by the C-terminal Gly of ubiquitin (a 76-residue protein attached to proteins as an intracellular targeting signal).. Hydrolase that can remove conjugated ubiquitin from proteins and participates in endoplasmic reticulum-associated degradation (ERAD) for misfolded lumenal proteins. May act by triming the ubiquitin chain on the associated substrate to facilitate their threading through the VCP/p97 pore. Ubiquitin moieties on substrates may present a steric impediment to the threading process when the substrate is transferred to the VCP pore and threaded through VCP's axial channel. Mediates deubiquitination of 'Lys-27'-, 'Lys-29'- and 'Lys-33'-linked polyubiquitin chains. Also able to hydrolyze 'Lys-11'-linked ubiquitin chains. Cleaves both polyubiquitin and di-ubiquitin. May play a role in macroautophagy, regulating for instance the clearance of damaged lysosomes. May recruit PLAA, UBXN6 and VCP to damaged lysosome membranes decorated with K48-linked ubiquitin chains and remove these chains allowing autophagosome formation. This is Ubiquitin thioesterase OTU1 (YOD1) from Homo sapiens (Human).